The chain runs to 485 residues: ATP synthase subunit beta, cyanelle (485 aa).

Residue 162-169 (GGAGVGKT) participates in ATP binding.

This sequence belongs to the ATPase alpha/beta chains family. In terms of assembly, F-type ATPases have 2 components, CF(1) - the catalytic core - and CF(0) - the membrane proton channel. CF(1) has five subunits: alpha(3), beta(3), gamma(1), delta(1), epsilon(1). CF(0) has four main subunits: a(1), b(1), b'(1) and c(9-12).

It is found in the plastid. It localises to the cyanelle thylakoid membrane. The enzyme catalyses ATP + H2O + 4 H(+)(in) = ADP + phosphate + 5 H(+)(out). Produces ATP from ADP in the presence of a proton gradient across the membrane. The catalytic sites are hosted primarily by the beta subunits. The protein is ATP synthase subunit beta, cyanelle of Cyanophora paradoxa.